Consider the following 656-residue polypeptide: Choline transporter-like protein 1 (656 aa).

A lipid anchor (N-myristoyl glycine) is attached at Gly2. Over 2 to 29 (GCCSSASAAQSSKREWKPLEDRSCTDIP) the chain is Cytoplasmic. Residues 30-50 (WLLLFVLFCIGMGFICGFSVA) traverse the membrane as a helical segment. At 51-211 (TGAAARLVSG…RLISGVMTSK (161 aa)) the chain is on the extracellular side. Residues Asn134 and Asn179 are each glycosylated (N-linked (GlcNAc...) asparagine). The chain crosses the membrane as a helical span at residues 212–232 (EIILGLCLLSLVLSMILMVII). At 233-237 (RYISR) the chain is on the cytoplasmic side. Residues 238 to 258 (VLVWILTILVILGSLGGTGVL) traverse the membrane as a helical segment. The Extracellular segment spans residues 259 to 287 (WWLYAKQRRSPKETVIPEQLQIAEDNLRA). The helical transmembrane segment at 288–308 (LLIYAISATVFTVILFLIMLV) threads the bilayer. The Cytoplasmic portion of the chain corresponds to 309 to 314 (MRKRVA). Residues 315 to 335 (LTIALFHVAGKVFIHLPLLVF) traverse the membrane as a helical segment. At 336 to 337 (QP) the chain is on the extracellular side. The chain crosses the membrane as a helical span at residues 338-358 (FWTFFALVLFWAYWIMTLLFL). Residues 359–379 (GTTGSAVQNEQGFVEYKISGP) are Cytoplasmic-facing. A helical membrane pass occupies residues 380–400 (LQYMWWYHVVGLIWISEFILA). The Extracellular portion of the chain corresponds to 401 to 441 (CQQMTVAGAVVTYYFTRDKRNLPFTPILASVNRLIRYHLGT). A helical membrane pass occupies residues 442-462 (VAKGSFIITLVKIPRMILMYI). Topologically, residues 463–536 (HSQLKGKENA…RVAAINTVGD (74 aa)) are cytoplasmic. The chain crosses the membrane as a helical span at residues 537 to 557 (FMLFLGKVLIVCSTGLAGIML). The Extracellular segment spans residues 558 to 565 (LNYQQDYT). A helical membrane pass occupies residues 566 to 586 (VWVLPLIIVCLFAFLVAHCFL). Residues 587 to 656 (SIYEMVVDVL…KPMASGASSA (70 aa)) lie on the Cytoplasmic side of the membrane. Residues 635 to 656 (AGKGGAADARKLKPMASGASSA) are disordered. Phosphoserine is present on Ser651.

The protein belongs to the CTL (choline transporter-like) family. Expressed in neurons, oligodendrocytes and astrocytes. Also expressed in the mucosal cell layer of the colon. In the developing brain, isoform 1 is expressed in both neurons and oligodendroglial cells, whereas isoform 2 is restricted to oligodendroglial cells.

The protein resides in the cell membrane. It is found in the mitochondrion outer membrane. It catalyses the reaction choline(out) + n H(+)(in) = choline(in) + n H(+)(out). The enzyme catalyses ethanolamine(out) + n H(+)(in) = ethanolamine(in) + n H(+)(out). Choline transporter, acts as a choline/H+ antiporter. Also acts as a high-affinity ethanolamine/H+ antiporter, regulating the supply of extracellular ethanolamine (Etn) for the CDP-Etn pathway, redistribute intracellular Etn and balance the CDP-Cho and CDP-Etn arms of the Kennedy pathway. Involved in membrane synthesis and myelin production. This Rattus norvegicus (Rat) protein is Choline transporter-like protein 1 (Slc44a1).